Consider the following 882-residue polypeptide: Alanine--tRNA ligase (882 aa).

Zn(2+)-binding residues include His-570, His-574, Cys-672, and His-676.

Belongs to the class-II aminoacyl-tRNA synthetase family. The cofactor is Zn(2+).

The protein resides in the cytoplasm. The catalysed reaction is tRNA(Ala) + L-alanine + ATP = L-alanyl-tRNA(Ala) + AMP + diphosphate. Its function is as follows. Catalyzes the attachment of alanine to tRNA(Ala) in a two-step reaction: alanine is first activated by ATP to form Ala-AMP and then transferred to the acceptor end of tRNA(Ala). Also edits incorrectly charged Ser-tRNA(Ala) and Gly-tRNA(Ala) via its editing domain. The sequence is that of Alanine--tRNA ligase from Xanthomonas campestris pv. campestris (strain ATCC 33913 / DSM 3586 / NCPPB 528 / LMG 568 / P 25).